The primary structure comprises 489 residues: MAAAAARVVLLPAARRRLWGFSESLLIRGAAGRSSYFGENRLRSTQAATQVVLNVPETRVTCLESGLRVASEDSGLSTCTVGLWIDAGSRYENEKNNGTAHFLEHMAFKGTKKRSQLDLELEIENMGAHLNAYTSREQTVYYAKAFSKDLPRAVEILADIIQNSTLGEAEIERERGVILREMQEVETNLQEVVFDYLHATAYQNTALGRTILGPTENIKSISRKDLVDYITTHYKGPRIVLAAAGGVSHDELLDLAKFHFGDSLCTHKGEIPALPPCKFTGSEIRVRDDKMPLAHLAIAVEAVGWAHPDTICLMVANTLIGNWDRSFGGGMNLSSKLAQLTCHGNLCHSFQSFNTSYTDTGLWGLYMVCEPSTVADMLHVVQKEWMRLCTSVTESEVARARNLLKTNMLLQLDGSTPICEDIGRQMLCYNRRIPIPELEARIDAVNAETIREVCTKYIYNRSPAIAAVGPIEQLPDFKQICSNMCWLRD.

A mitochondrion-targeting transit peptide spans 1–45 (MAAAAARVVLLPAARRRLWGFSESLLIRGAAGRSSYFGENRLRST). H101 is a binding site for Zn(2+). E104 functions as the Proton acceptor in the catalytic mechanism. The Zn(2+) site is built by H105 and E181.

Belongs to the peptidase M16 family. In terms of assembly, heterodimer of PMPCA (alpha) and PMPCB (beta) subunits, forming the mitochondrial processing protease (MPP) in which PMPCA is involved in substrate recognition and binding and PMPCB is the catalytic subunit. Requires Zn(2+) as cofactor.

It is found in the mitochondrion matrix. The catalysed reaction is Release of N-terminal transit peptides from precursor proteins imported into the mitochondrion, typically with Arg in position P2.. Binding to PMPCA is required for catalytic activity. Its function is as follows. Catalytic subunit of the essential mitochondrial processing protease (MPP), which cleaves the mitochondrial sequence off newly imported precursors proteins. Preferentially, cleaves after an arginine at position P2. Required for PINK1 turnover by coupling PINK1 mitochondrial import and cleavage, which results in subsequent PINK1 proteolysis. The polypeptide is Mitochondrial-processing peptidase subunit beta (PMPCB) (Pongo abelii (Sumatran orangutan)).